Consider the following 246-residue polypeptide: Homeobox protein Crxos (246 aa).

2 consecutive DNA-binding regions (homeobox) follow at residues 22-72 and 129-182; these read WEQL…EMRP and ELTD…RGYR. A Nuclear localization signal motif is present at residues 163 to 177; the sequence is RKDLIRSWFITQRHR.

This sequence belongs to the paired homeobox family. Specifically expressed during the preimplantation stages of embryonic development, between the four-cell to eight-cell stage and the morula stage. Expressed in adult testis. As to expression, detected in early embryos; expression decreases gradually with embryonic development. Also expressed in extraembryonic tissues after E14.5, expression level increases drastically until E18.5, immediately before partum.

The protein resides in the nucleus. Transcription factor that acts as a regulator of embryonic stem cell differentiation during the preimplantation stages of embryonic development. Functionally, transcription factor that acts as a positive regulator of embryonic stem cell differentiation. Its function is as follows. Transcription factor that promotes embryonic stem cell pluripotency. In terms of biological role, transcription factor that promotes embryonic stem cell pluripotency. Also involved in extraembryonic tissues development by promoting the expression of placental prolactin family genes. The polypeptide is Homeobox protein Crxos (Mus musculus (Mouse)).